Reading from the N-terminus, the 364-residue chain is Transcriptional regulator ICP22 homolog (364 aa).

Disordered stretches follow at residues 1 to 73 (MDRV…HGAR) and 173 to 364 (VIEG…AAAP). The segment covering 12 to 46 (VPSPPFSPVDPPGPRPTTPVPGSSPPSPASTPTPP) has biased composition (pro residues). 3 stretches are compositionally biased toward acidic residues: residues 181–191 (EECDVDEDDAG), 207–286 (CEDD…DGSD), and 294–343 (DGGD…GEGE). A compositionally biased stretch (low complexity) spans 355–364 (RAPTRPAAAP).

This sequence belongs to the herpesviridae ICP22 family.

This Sus scrofa (Pig) protein is Transcriptional regulator ICP22 homolog (RSP40).